Reading from the N-terminus, the 657-residue chain is Methionine--tRNA ligase (657 aa).

A 'HIGH' region motif is present at residues 13–23; it reads YYPSGNLHIGH. Positions 308–312 match the 'KMSKS' region motif; that stretch reads KMSKS. Lys311 contributes to the ATP binding site. The tRNA-binding domain occupies 557-657; that stretch reads DFDKVEIKAA…SAIPNGAVIK (101 aa).

The protein belongs to the class-I aminoacyl-tRNA synthetase family. MetG type 2B subfamily. In terms of assembly, homodimer.

The protein localises to the cytoplasm. The catalysed reaction is tRNA(Met) + L-methionine + ATP = L-methionyl-tRNA(Met) + AMP + diphosphate. In terms of biological role, is required not only for elongation of protein synthesis but also for the initiation of all mRNA translation through initiator tRNA(fMet) aminoacylation. The sequence is that of Methionine--tRNA ligase from Staphylococcus aureus (strain Mu50 / ATCC 700699).